The sequence spans 129 residues: Small ribosomal subunit protein uS11 (129 aa).

The protein belongs to the universal ribosomal protein uS11 family. As to quaternary structure, part of the 30S ribosomal subunit. Interacts with proteins S7 and S18. Binds to IF-3.

Its function is as follows. Located on the platform of the 30S subunit, it bridges several disparate RNA helices of the 16S rRNA. Forms part of the Shine-Dalgarno cleft in the 70S ribosome. This is Small ribosomal subunit protein uS11 from Bartonella tribocorum (strain CIP 105476 / IBS 506).